The chain runs to 42 residues: Photosystem II reaction center protein J (42 aa).

A helical membrane pass occupies residues 10 to 30 (IPLWLVGTVVGLLAIGLLALF).

Belongs to the PsbJ family. In terms of assembly, PSII is composed of 1 copy each of membrane proteins PsbA, PsbB, PsbC, PsbD, PsbE, PsbF, PsbH, PsbI, PsbJ, PsbK, PsbL, PsbM, PsbT, PsbX, PsbY, PsbZ, Psb30/Ycf12, at least 3 peripheral proteins of the oxygen-evolving complex and a large number of cofactors. It forms dimeric complexes.

The protein localises to the plastid. The protein resides in the chloroplast thylakoid membrane. Its function is as follows. One of the components of the core complex of photosystem II (PSII). PSII is a light-driven water:plastoquinone oxidoreductase that uses light energy to abstract electrons from H(2)O, generating O(2) and a proton gradient subsequently used for ATP formation. It consists of a core antenna complex that captures photons, and an electron transfer chain that converts photonic excitation into a charge separation. The protein is Photosystem II reaction center protein J of Mesostigma viride (Green alga).